Here is a 303-residue protein sequence, read N- to C-terminus: Coenzyme PQQ synthesis protein B (303 aa).

Belongs to the PqqB family.

The protein operates within cofactor biosynthesis; pyrroloquinoline quinone biosynthesis. May be involved in the transport of PQQ or its precursor to the periplasm. This Pseudomonas putida (strain ATCC 47054 / DSM 6125 / CFBP 8728 / NCIMB 11950 / KT2440) protein is Coenzyme PQQ synthesis protein B.